Here is a 532-residue protein sequence, read N- to C-terminus: CTP synthase (532 aa).

Residues 1–267 form an amidoligase domain region; it reads MTKYIFVTGG…DDIVLEHLQL (267 aa). Ser-13 is a CTP binding site. Ser-13 provides a ligand contact to UTP. Residue 14 to 19 participates in ATP binding; that stretch reads SIGKGI. Residue Tyr-54 coordinates L-glutamine. Asp-71 contributes to the ATP binding site. 2 residues coordinate Mg(2+): Asp-71 and Glu-141. Residues 148 to 150, 188 to 193, and Lys-224 contribute to the CTP site; these read DIE and KTKPTQ. UTP is bound by residues 188–193 and Lys-224; that span reads KTKPTQ. The 241-residue stretch at 292 to 532 folds into the Glutamine amidotransferase type-1 domain; that stretch reads RIGLVGKYVS…DFVGAALKNK (241 aa). Gly-354 serves as a coordination point for L-glutamine. Cys-381 functions as the Nucleophile; for glutamine hydrolysis in the catalytic mechanism. L-glutamine is bound by residues 382–385, Glu-405, and Arg-462; that span reads LGMQ. Active-site residues include His-507 and Glu-509.

This sequence belongs to the CTP synthase family. In terms of assembly, homotetramer.

The enzyme catalyses UTP + L-glutamine + ATP + H2O = CTP + L-glutamate + ADP + phosphate + 2 H(+). The catalysed reaction is L-glutamine + H2O = L-glutamate + NH4(+). It carries out the reaction UTP + NH4(+) + ATP = CTP + ADP + phosphate + 2 H(+). The protein operates within pyrimidine metabolism; CTP biosynthesis via de novo pathway; CTP from UDP: step 2/2. With respect to regulation, allosterically activated by GTP, when glutamine is the substrate; GTP has no effect on the reaction when ammonia is the substrate. The allosteric effector GTP functions by stabilizing the protein conformation that binds the tetrahedral intermediate(s) formed during glutamine hydrolysis. Inhibited by the product CTP, via allosteric rather than competitive inhibition. Its function is as follows. Catalyzes the ATP-dependent amination of UTP to CTP with either L-glutamine or ammonia as the source of nitrogen. Regulates intracellular CTP levels through interactions with the four ribonucleotide triphosphates. This Listeria monocytogenes serovar 1/2a (strain ATCC BAA-679 / EGD-e) protein is CTP synthase.